The sequence spans 214 residues: Adenylate kinase (214 aa).

10–15 (GAGKGT) contributes to the ATP binding site. Residues 30–59 (STGDMLRAAIKAGTELGKQAKSVIDAGQLV) are NMP. AMP is bound by residues Thr-31, Arg-36, 57–59 (QLV), 85–88 (GFPR), and Gln-92. An LID region spans residues 122–159 (GRRAHLASGRTYHNVYNPPKVEGKDDVTGEDLVIREDD). ATP is bound by residues Arg-123 and 132–133 (TY). AMP is bound by residues Arg-156 and Arg-167. Lys-200 is an ATP binding site.

Belongs to the adenylate kinase family. Monomer.

It is found in the cytoplasm. It catalyses the reaction AMP + ATP = 2 ADP. It participates in purine metabolism; AMP biosynthesis via salvage pathway; AMP from ADP: step 1/1. Functionally, catalyzes the reversible transfer of the terminal phosphate group between ATP and AMP. Plays an important role in cellular energy homeostasis and in adenine nucleotide metabolism. The sequence is that of Adenylate kinase from Photobacterium profundum (strain SS9).